Consider the following 309-residue polypeptide: Dicarboxylate carrier UCP2 (309 aa).

Over 1 to 16 the chain is Mitochondrial intermembrane; the sequence is MVGFKATDVPPTATVK. 3 Solcar repeats span residues 11–106, 114–203, and 212–297; these read PTAT…VKQF, AGIG…IKDT, and DDLP…LKRA. The important for interaction with long-chain fatty acids stretch occupies residues 16–63; the sequence is KFLGAGTAACIADLITFPLDTAKVRLQIQGESQGLVRTAASAQYRGVL. A helical membrane pass occupies residues 17-40; it reads FLGAGTAACIADLITFPLDTAKVR. The Mitochondrial matrix segment spans residues 41 to 77; that stretch reads LQIQGESQGLVRTAASAQYRGVLGTILTMVRTEGPRS. A helical membrane pass occupies residues 78–103; the sequence is LYNGLVAGLQRQMSFASVRIGLYDSV. Residues 104–119 lie on the Mitochondrial intermembrane side of the membrane; it reads KQFYTKGSEHAGIGSR. A helical membrane pass occupies residues 120–145; sequence LLAGSTTGALAVAVAQPTDVVKVRFQ. Residues 146–173 are Mitochondrial matrix-facing; it reads AQARAGGGRRYQSTVEAYKTIAREEGIR. A helical transmembrane segment spans residues 174-199; it reads GLWKGTSPNVARNAIVNCAELVTYDL. Residues 200–217 are Mitochondrial intermembrane-facing; it reads IKDTLLKANLMTDDLPCH. A helical transmembrane segment spans residues 218-242; it reads FTSAFGAGFCTTVIASPVDVVKTRY. The Mitochondrial matrix segment spans residues 243 to 268; it reads MNSALGQYHSAGHCALTMLRKEGPRA. A helical transmembrane segment spans residues 269 to 294; sequence FYKGFMPSFLRLGSWNVVMFVTYEQL. The segment at 278-285 is important for interaction with long-chain fatty acids; sequence LRLGSWNV. Residues 295–309 are Mitochondrial intermembrane-facing; that stretch reads KRALMAAYQSREAPF.

Belongs to the mitochondrial carrier (TC 2.A.29) family. Homotetramer. Adopts an asymmetrical dimer of dimers functional form. Interacts with MICU1 (when methylated); leading to decrease the calcium sensitivity of MICU1. In terms of tissue distribution, widely expressed. Highest in spleen, lung, white and brown adipose tissues. 4-6 times higher levels are detected in white adipose tissue of ob/ob and db/db mice when compared to lean littermates. Expressed in neurons of the ventromedial nucleus of the hypothalamus (at protein level). Expressed in thymocytes (at protein level).

Its subcellular location is the mitochondrion inner membrane. It catalyses the reaction L-aspartate(out) + phosphate(in) + H(+)(in) = L-aspartate(in) + phosphate(out) + H(+)(out). The catalysed reaction is oxaloacetate(out) + phosphate(in) + H(+)(in) = oxaloacetate(in) + phosphate(out) + H(+)(out). The enzyme catalyses (S)-malate(out) + phosphate(in) + H(+)(in) = (S)-malate(in) + phosphate(out) + H(+)(out). It carries out the reaction malonate(out) + phosphate(in) + H(+)(in) = malonate(in) + phosphate(out) + H(+)(out). It catalyses the reaction sulfate(out) + phosphate(in) + H(+)(in) = sulfate(in) + phosphate(out) + H(+)(out). The catalysed reaction is (S)-malate(out) = (S)-malate(in). The enzyme catalyses L-aspartate(out) = L-aspartate(in). It carries out the reaction phosphate(in) = phosphate(out). It catalyses the reaction chloride(in) = chloride(out). The catalysed reaction is H(+)(in) = H(+)(out). The enzyme catalyses a long-chain fatty acid(out) = a long-chain fatty acid(in). With respect to regulation, proton conductance is activated by free long-chain fatty acids and allosterically inhibited by purine nucleotides. Could be constitutively inhibited by GDP. In terms of biological role, antiporter that exports dicarboxylate intermediates of the Krebs cycle in exchange for phosphate plus a proton across the inner membrane of mitochondria, a process driven by mitochondrial motive force with an overall impact on glycolysis, glutaminolysis and glutathione-dependent redox balance. Continuous export of oxaloacetate and related four-carbon dicarboxylates from mitochondrial matrix into the cytosol negatively regulates the oxidation of acetyl-CoA substrates via the Krebs cycle lowering the ATP/ADP ratio and reactive oxygen species (ROS) production. May mediate inducible proton entry into the mitochondrial matrix affecting ATP turnover as a protection mechanism against oxidative stress. The proton currents are most likely associated with fatty acid flipping across the inner membrane of mitochondria in a metabolic process regulated by free fatty acids and purine nucleotides. Regulates the use of glucose as a source of energy. Required for glucose-induced DRP1-dependent mitochondrial fission and neuron activation in the ventromedial nucleus of the hypothalamus (VMH). This mitochondrial adaptation mechanism modulates the VMH pool of glucose-excited neurons with an impact on systemic glucose homeostasis. Regulates ROS levels and metabolic reprogramming of macrophages during the resolution phase of inflammation. Attenuates ROS production in response to IL33 to preserve the integrity of the Krebs cycle required for persistent production of itaconate and subsequent GATA3-dependent differentiation of inflammation-resolving alternatively activated macrophages. Can unidirectionally transport anions including L-malate, L-aspartate, phosphate and chloride ions. Does not mediate adaptive thermogenesis. This Mus musculus (Mouse) protein is Dicarboxylate carrier UCP2 (Ucp2).